We begin with the raw amino-acid sequence, 955 residues long: MDQNGVNAGNGHKSIDLIQIMDKWQKKWTEAKIFEAEHDLRDKFFITAAFPYLNGVLHAGHLRTFTIPETIARYQRMKNKNVLWTFGFHVTGTPILGLANQIKERKEDIIWAYNNLHNIPMDELIKLDTPEAIVECFSKKATEAFKRMGFSLDWRRNFKTDDKVFSKFIEWQFYKLKEMGHITKGSHPVRYCPKCENPVEDHDLLHGEESTTVEYSLIKFTSEFDGKEIIMPMATLRPETLFGVTNAWVNPNEMYVMAEVYDEIQKLDSEDVDLKYNGIWIVGKECADKLKEQDRKIEILKEIKGSELLGLKIKNPVTKKEVPLFPADFVEMGIGTGCVMGVPAHAPYDYIALRDLGKIEEVGLIPLIEIEGYDKFPAKEIVEKLGVKDQNDDELLEQATSKIYKDEFHKGKLNENCGEYAGISVKDIKEKLTKDYLNSNIAEIMYEFSEQKVVCRCGEKCIIKTVKGQWFINYSDENWKKLAHECIDSMNFAPENIRQEFHNKVDWMKDKACARKKGLGTLLPFDENWIIESLSDSTIYMAYYTIARFINEGLTPEQLVPELFEYVFLGNGNVEEIAKNSNISKETIEEMRKEFLYYYPLDWRCSAKDLIPNHLTFMIFNHVALFKKEHWPRGIEINGYVTIEGKKLSKSKGPVLPVSEVAENFGADVARFYITTCAELPQDADVKFKEMEKARDNLIKLYELAVSVMEEESTQKEFSLIDKWLLHKTYSSIKGAETAYEEFQLRKIGLMFYELINDLRWYKRRGGENNNVLKEVVEIWTKLLSPVTPHLCEEIWEKLGYSGFISQEMYPEIKSELINEDLELGEEFIKSAMEDIRNIKGVAKINPEKMYLYTADDWKYDLLEFMNENSEKNVKAIIPLVMKEDKFKRHGKEVMKLINEIMKIGVKKAIAEVEILENAKTFIESEFDCEVIVNGEDVKGKKKFAIPYKPAIYME.

The 'HIGH' region signature appears at proline 51–histidine 61. Positions lysine 647–serine 651 match the 'KMSKS' region motif. Lysine 650 contacts ATP.

Belongs to the class-I aminoacyl-tRNA synthetase family.

The protein localises to the cytoplasm. The enzyme catalyses tRNA(Leu) + L-leucine + ATP = L-leucyl-tRNA(Leu) + AMP + diphosphate. The chain is Leucine--tRNA ligase from Methanococcus maripaludis (strain C7 / ATCC BAA-1331).